Here is a 483-residue protein sequence, read N- to C-terminus: Dual specificity protein kinase CLK1 (483 aa).

The disordered stretch occupies residues 1-49 (MRHSKRTYCPDWDERDWDYGTWRSSSSHKRKKRSHSSAREQKRCRYDHS). The segment covering 26–36 (SSHKRKKRSHS) has biased composition (basic residues). Positions 29-33 (KRKKR) match the Nuclear localization signal motif. Positions 37-49 (SAREQKRCRYDHS) are enriched in basic and acidic residues. S61 carries the post-translational modification Phosphoserine. The segment covering 84-111 (EPGHPYGEPGSRYQMHSSKSSGRSGRSS) has biased composition (low complexity). The interval 84–146 (EPGHPYGEPG…SRSVEDDEEG (63 aa)) is disordered. Residues 112–137 (YKSKHRSRHHTSQHHSHGKSHRRKRS) are compositionally biased toward basic residues. Phosphoserine is present on S139. Residues 160–476 (YEIVDTLGEG…LKEALKHPFF (317 aa)) enclose the Protein kinase domain. ATP is bound by residues 166-174 (LGEGAFGKV) and K190. D287 acts as the Proton acceptor in catalysis.

This sequence belongs to the protein kinase superfamily. CMGC Ser/Thr protein kinase family. Lammer subfamily. Interacts with PPIG and UBL5. In terms of processing, autophosphorylates on all three types of residues.

Its subcellular location is the nucleus. It carries out the reaction L-seryl-[protein] + ATP = O-phospho-L-seryl-[protein] + ADP + H(+). The enzyme catalyses L-threonyl-[protein] + ATP = O-phospho-L-threonyl-[protein] + ADP + H(+). It catalyses the reaction L-tyrosyl-[protein] + ATP = O-phospho-L-tyrosyl-[protein] + ADP + H(+). Regulates splicing of its own pre-mRNA according to its kinase activity; increased expression of the catalytically active form influences splicing to generate the catalytically inactive splicing variant lacking the kinase domain. Leucettine L41 inhibits its kinase activity and affects the regulation of alternative splicing mediated by phosphorylation of SR proteins. Dual specificity kinase acting on both serine/threonine and tyrosine-containing substrates. Phosphorylates serine- and arginine-rich (SR) proteins of the spliceosomal complex and may be a constituent of a network of regulatory mechanisms that enable SR proteins to control RNA splicing. Phosphorylates: SRSF1, SRSF3 and PTPN1. Regulates the alternative splicing of tissue factor (F3) pre-mRNA in endothelial cells. The polypeptide is Dual specificity protein kinase CLK1 (Mus musculus (Mouse)).